We begin with the raw amino-acid sequence, 432 residues long: Trigger factor (432 aa).

The region spanning 161–246 is the PPIase FKBP-type domain; it reads GKRVSIDFVG…VNKVEARQLP (86 aa).

Belongs to the FKBP-type PPIase family. Tig subfamily.

The protein localises to the cytoplasm. The enzyme catalyses [protein]-peptidylproline (omega=180) = [protein]-peptidylproline (omega=0). Functionally, involved in protein export. Acts as a chaperone by maintaining the newly synthesized protein in an open conformation. Functions as a peptidyl-prolyl cis-trans isomerase. This chain is Trigger factor, found in Vibrio vulnificus (strain YJ016).